Here is a 123-residue protein sequence, read N- to C-terminus: MEKKQNKRAKGEFYELMAQRYLEQHQLTFIARNFQSKTGELDLIMRDQDSFVFVEVKYRNTSNFGSAQEMVTWQKQRKLQRTALFWLMKNKLSVEHTSFRFDVVAIHAQGKEINWIKNAIVEG.

Belongs to the UPF0102 family.

The polypeptide is UPF0102 protein VFMJ11_2324 (Aliivibrio fischeri (strain MJ11) (Vibrio fischeri)).